A 172-amino-acid polypeptide reads, in one-letter code: MIIYKDCITEDEMFSDIYKIIETPDGMCLEVEGKVIQREEGAIDDALIGGNASAEFQEDDVGGSSLTSGVDIVMNHKLQETGFTKDSYKNYIKDYVKQLKAHLEKTNPERVNTFMKGAQETVKKILGNFKNYQFYTGERMNPDGMVGLLDYREDGITPFMIFFKDGLIIEKC.

The TCTP domain occupies methionine 1–cysteine 172.

It belongs to the TCTP family.

The protein localises to the cytoplasm. Its function is as follows. Involved in calcium binding and microtubule stabilization. This is Translationally-controlled tumor protein homolog (tpt1) from Xenopus laevis (African clawed frog).